The following is a 174-amino-acid chain: Elongation factor Tu, mitochondrial (174 aa).

62–66 contacts GTP; it reads DCPGH. K78 carries the N6-succinyllysine modification. Residue T103 is modified to Phosphothreonine. S121 is subject to Phosphoserine. An N6-acetyllysine modification is found at K161.

Belongs to the GTP-binding elongation factor family. EF-Tu/EF-1A subfamily.

The protein resides in the mitochondrion. The enzyme catalyses GTP + H2O = GDP + phosphate + H(+). Functionally, GTP hydrolase that promotes the GTP-dependent binding of aminoacyl-tRNA to the A-site of ribosomes during protein biosynthesis. The sequence is that of Elongation factor Tu, mitochondrial from Mesocricetus auratus (Golden hamster).